The following is a 354-amino-acid chain: tRNA-specific 2-thiouridylase MnmA (354 aa).

ATP is bound by residues 7–14 and Met33; that span reads AMSGGVDS. Catalysis depends on Cys94, which acts as the Nucleophile. Cys94 and Cys192 are joined by a disulfide. Position 118 (Gly118) interacts with ATP. The interaction with tRNA stretch occupies residues 141 to 143; it reads KDQ. The active-site Cysteine persulfide intermediate is the Cys192. An interaction with tRNA region spans residues 296 to 297; the sequence is RY.

It belongs to the MnmA/TRMU family.

The protein localises to the cytoplasm. It catalyses the reaction S-sulfanyl-L-cysteinyl-[protein] + uridine(34) in tRNA + AH2 + ATP = 2-thiouridine(34) in tRNA + L-cysteinyl-[protein] + A + AMP + diphosphate + H(+). Catalyzes the 2-thiolation of uridine at the wobble position (U34) of tRNA, leading to the formation of s(2)U34. This is tRNA-specific 2-thiouridylase MnmA from Trichlorobacter lovleyi (strain ATCC BAA-1151 / DSM 17278 / SZ) (Geobacter lovleyi).